We begin with the raw amino-acid sequence, 203 residues long: MIDSLNTLVPMVVEQTARGERAYDIYSRLLKERVVFLVGPVEDHMANLVVAQLLFLESENPDKDIHLYINSPGGSVTAGLSIYDTMQFIKPDVSTLCVGQAASMGAVLLAGGAGGKRHCLPHSRLLIHQPLGGFQGQATDIDIHAREILLVRERLNHILAKHTGQPIEKIQHDTDRDYFMSATESLAYGLVDSVLKQRAEISL.

Serine 103 serves as the catalytic Nucleophile. Residue histidine 128 is part of the active site.

The protein belongs to the peptidase S14 family. Fourteen ClpP subunits assemble into 2 heptameric rings which stack back to back to give a disk-like structure with a central cavity, resembling the structure of eukaryotic proteasomes.

The protein resides in the cytoplasm. The enzyme catalyses Hydrolysis of proteins to small peptides in the presence of ATP and magnesium. alpha-casein is the usual test substrate. In the absence of ATP, only oligopeptides shorter than five residues are hydrolyzed (such as succinyl-Leu-Tyr-|-NHMec, and Leu-Tyr-Leu-|-Tyr-Trp, in which cleavage of the -Tyr-|-Leu- and -Tyr-|-Trp bonds also occurs).. In terms of biological role, cleaves peptides in various proteins in a process that requires ATP hydrolysis. Has a chymotrypsin-like activity. Plays a major role in the degradation of misfolded proteins. This is ATP-dependent Clp protease proteolytic subunit from Nitrosococcus oceani (strain ATCC 19707 / BCRC 17464 / JCM 30415 / NCIMB 11848 / C-107).